The following is a 215-amino-acid chain: UPF0502 protein YceH (215 aa).

The protein belongs to the UPF0502 family.

In Salmonella arizonae (strain ATCC BAA-731 / CDC346-86 / RSK2980), this protein is UPF0502 protein YceH.